Reading from the N-terminus, the 299-residue chain is uncharacterized protein (299 aa).

This is an uncharacterized protein from Escherichia coli (strain K12).